We begin with the raw amino-acid sequence, 256 residues long: 5-keto-4-deoxy-D-glucarate aldolase (256 aa).

Histidine 50 serves as the catalytic Proton acceptor. A substrate-binding site is contributed by glutamine 151. Mg(2+) is bound at residue glutamate 153. The substrate site is built by serine 178 and aspartate 179. Aspartate 179 contacts Mg(2+).

This sequence belongs to the HpcH/HpaI aldolase family. KDGluc aldolase subfamily. In terms of assembly, homohexamer; trimer of dimers. The cofactor is Mg(2+).

It catalyses the reaction 5-dehydro-4-deoxy-D-glucarate = 2-hydroxy-3-oxopropanoate + pyruvate. The enzyme catalyses 2-dehydro-3-deoxy-D-glucarate = 2-hydroxy-3-oxopropanoate + pyruvate. It functions in the pathway carbohydrate acid metabolism; galactarate degradation; D-glycerate from galactarate: step 2/3. Functionally, catalyzes the reversible retro-aldol cleavage of both 5-keto-4-deoxy-D-glucarate and 2-keto-3-deoxy-D-glucarate to pyruvate and tartronic semialdehyde. In Salmonella agona (strain SL483), this protein is 5-keto-4-deoxy-D-glucarate aldolase.